A 123-amino-acid chain; its full sequence is Class I hydrophobin 2 (123 aa).

The first 16 residues, 1–16, serve as a signal peptide directing secretion; that stretch reads MYAYTVIAFLAASVAA. Intrachain disulfides connect cysteine 35-cysteine 97, cysteine 43-cysteine 91, cysteine 44-cysteine 72, and cysteine 98-cysteine 116.

Belongs to the fungal hydrophobin family.

It is found in the secreted. It localises to the cell wall. In terms of biological role, aerial growth, conidiation, and dispersal of filamentous fungi in the environment rely upon a capability of their secreting small amphipathic proteins called hydrophobins (HPBs) with low sequence identity. Class I can self-assemble into an outermost layer of rodlet bundles on aerial cell surfaces, conferring cellular hydrophobicity that supports fungal growth, development and dispersal; whereas Class II form highly ordered films at water-air interfaces through intermolecular interactions but contribute nothing to the rodlet structure. HYD1 and HYD2 are required for the structural integrity of the long aerial chains of microconidia. Does not seem to be important for the ability to cause seedling disease. In Gibberella moniliformis (Maize ear and stalk rot fungus), this protein is Class I hydrophobin 2.